Consider the following 326-residue polypeptide: MSTAKFVVPKAVENVRIEKFCLKLLPNIKLSQFFKLLRLGKVLLNNTKAKLGQRVSSGDTIVFQFAIEPYLHNHSEVVDLTQVQDDLQVIFEDEQLIVVDKPAGVVCQPDAKHELFNLANSLLKHCGYNQYFKNSLSFIPRFAHRIDRNTCGLVIGAKTNQALQELEAVFRHNLLMKQYQGLVFGPFNFKGTQKAYWAKDAYQALVTVKAKPFPNAKPITTIFENSKYLTKLDLSLLTIRLVSGKTHQIRACLNLLNTQLVGDRKYQLLQFKNRNRDFKHQALHATNLSFAQLDKQKFPLLANYSQRQFKSQLVPWFASLIKGVSI.

Positions valine 15–glutamate 76 constitute an S4 RNA-binding domain. Aspartate 147 is a catalytic residue.

Belongs to the pseudouridine synthase RluA family.

It catalyses the reaction a uridine in RNA = a pseudouridine in RNA. This is an uncharacterized protein from Mycoplasma pneumoniae (strain ATCC 29342 / M129 / Subtype 1) (Mycoplasmoides pneumoniae).